Consider the following 251-residue polypeptide: 7-cyano-7-deazaguanine synthase (251 aa).

Positions 1 to 21 (MSDLPRHSPRRQHAGESAVTA) are disordered. 35 to 45 (YSGGMDSYTVL) provides a ligand contact to ATP. The Zn(2+) site is built by Cys-212, Cys-220, Cys-223, and Cys-226.

This sequence belongs to the QueC family. Zn(2+) is required as a cofactor.

It catalyses the reaction 7-carboxy-7-deazaguanine + NH4(+) + ATP = 7-cyano-7-deazaguanine + ADP + phosphate + H2O + H(+). The protein operates within purine metabolism; 7-cyano-7-deazaguanine biosynthesis. Catalyzes the ATP-dependent conversion of 7-carboxy-7-deazaguanine (CDG) to 7-cyano-7-deazaguanine (preQ(0)). The chain is 7-cyano-7-deazaguanine synthase from Chromohalobacter salexigens (strain ATCC BAA-138 / DSM 3043 / CIP 106854 / NCIMB 13768 / 1H11).